A 324-amino-acid chain; its full sequence is Protein ChrB (324 aa).

In terms of biological role, together with ChrA1, this protein reduces chromate accumulation and is essential for chromate resistance, possibly as a regulatory protein. The chain is Protein ChrB from Cupriavidus metallidurans (strain ATCC 43123 / DSM 2839 / NBRC 102507 / CH34) (Ralstonia metallidurans).